A 368-amino-acid polypeptide reads, in one-letter code: Histidinol-phosphate aminotransferase (368 aa).

K215 bears the N6-(pyridoxal phosphate)lysine mark.

Belongs to the class-II pyridoxal-phosphate-dependent aminotransferase family. Histidinol-phosphate aminotransferase subfamily. As to quaternary structure, homodimer. It depends on pyridoxal 5'-phosphate as a cofactor.

The catalysed reaction is L-histidinol phosphate + 2-oxoglutarate = 3-(imidazol-4-yl)-2-oxopropyl phosphate + L-glutamate. Its pathway is amino-acid biosynthesis; L-histidine biosynthesis; L-histidine from 5-phospho-alpha-D-ribose 1-diphosphate: step 7/9. The sequence is that of Histidinol-phosphate aminotransferase (hisC) from Buchnera aphidicola subsp. Acyrthosiphon pisum (strain APS) (Acyrthosiphon pisum symbiotic bacterium).